The primary structure comprises 370 residues: Uroporphyrinogen decarboxylase (370 aa).

Substrate is bound by residues 29–33, Asp79, Tyr155, Ser210, and His342; that span reads RQAGR.

This sequence belongs to the uroporphyrinogen decarboxylase family. In terms of assembly, homodimer.

It localises to the cytoplasm. The enzyme catalyses uroporphyrinogen III + 4 H(+) = coproporphyrinogen III + 4 CO2. Its pathway is porphyrin-containing compound metabolism; protoporphyrin-IX biosynthesis; coproporphyrinogen-III from 5-aminolevulinate: step 4/4. In terms of biological role, catalyzes the decarboxylation of four acetate groups of uroporphyrinogen-III to yield coproporphyrinogen-III. This chain is Uroporphyrinogen decarboxylase, found in Variovorax paradoxus (strain S110).